The sequence spans 612 residues: Bifunctional lycopene cyclase/phytoene synthase (612 aa).

Residues 1 to 268 (MGWEYAQVHL…IVFGLIACDN (268 aa)) are lycopene beta-cyclase. Transmembrane regions (helical) follow at residues 3-23 (WEYAQVHLKYTIPFGVVLAAV), 31-51 (LDVFKLVFLITVSFFWVVKGL), 112-130 (LFFFVIQTFNTSLLYMILS), 148-168 (IAGQILFASAIIFGLVSVSSG), 171-191 (GMYMGLILIWACPFLLFLWSI), 203-223 (NTALPIALPTLYLWVVDTFAL), and 246-266 (IEEAVFFLLTNTLIVFGLIAC). A phytoene synthase region spans residues 275 to 612 (TFPEHFPRTK…IRVAWSALNK (338 aa)).

It in the N-terminal section; belongs to the lycopene beta-cyclase family. This sequence in the C-terminal section; belongs to the phytoene/squalene synthase family.

It localises to the membrane. The enzyme catalyses all-trans-lycopene = gamma-carotene. It catalyses the reaction gamma-carotene = all-trans-beta-carotene. It carries out the reaction 2 (2E,6E,10E)-geranylgeranyl diphosphate = 15-cis-phytoene + 2 diphosphate. It participates in carotenoid biosynthesis; beta-carotene biosynthesis. It functions in the pathway carotenoid biosynthesis; phytoene biosynthesis; all-trans-phytoene from geranylgeranyl diphosphate: step 1/1. Bifunctional enzyme; part of the car gene cluster that mediates the biosynthesis of neurosporaxanthin, a carboxylic apocarotenoid acting as an essential protective pigments and leading to orange pigmentation. CarAR catalyzes the first step of the pathway by converting geranylgeranyl diphosphate to phytoene, as well as the later cyclization step that transforms the carB product lycopene into gamma-carotene. CarAR also converts part of gamma-carotene into beta-carotene. Neurosporaxanthin is synthesized from geranyl-geranyl pyrophosphate (GGPP) through several enzymatic activities. Phytoene synthase activity performed by the bifunctional enzyme carAR first produces phytoene from geranyl-geranyl pyrophosphate (GGPP). The phytoene dehydrogenase carB then introduces 4 desaturations to lead to lycopene which is substrate of the carotene cyclase activity of carAR that leads to the production of gamma-carotene. CarB then performs a 5th desaturation reaction to yield torulene. Torulene is the substrate of the dioxidase carT that breaks the molecule, removing five carbon atoms to yield beta-apo-4'-carotenal, whereas the aldehyde dehydrogenase carD mediates the last step by converting beta-apo-4'-carotenal into neurosporaxanthin. This chain is Bifunctional lycopene cyclase/phytoene synthase, found in Fusarium fujikuroi (Bakanae and foot rot disease fungus).